The sequence spans 79 residues: Acyl carrier protein (79 aa).

The 76-residue stretch at 2–77 (SNIEERVKKI…QAIDYINAHA (76 aa)) folds into the Carrier domain. Ser37 is subject to O-(pantetheine 4'-phosphoryl)serine.

It belongs to the acyl carrier protein (ACP) family. In terms of processing, 4'-phosphopantetheine is transferred from CoA to a specific serine of apo-ACP by AcpS. This modification is essential for activity because fatty acids are bound in thioester linkage to the sulfhydryl of the prosthetic group.

The protein localises to the cytoplasm. Its pathway is lipid metabolism; fatty acid biosynthesis. Carrier of the growing fatty acid chain in fatty acid biosynthesis. The polypeptide is Acyl carrier protein (Thioalkalivibrio sulfidiphilus (strain HL-EbGR7)).